The following is a 125-amino-acid chain: Glycine cleavage system H protein (125 aa).

One can recognise a Lipoyl-binding domain in the interval 23 to 105; sequence VSTVGITEHA…FEGGWLFKVR (83 aa). Lys64 is modified (N6-lipoyllysine).

The protein belongs to the GcvH family. As to quaternary structure, the glycine cleavage system is composed of four proteins: P, T, L and H. Requires (R)-lipoate as cofactor.

In terms of biological role, the glycine cleavage system catalyzes the degradation of glycine. The H protein shuttles the methylamine group of glycine from the P protein to the T protein. The chain is Glycine cleavage system H protein from Streptomyces avermitilis (strain ATCC 31267 / DSM 46492 / JCM 5070 / NBRC 14893 / NCIMB 12804 / NRRL 8165 / MA-4680).